We begin with the raw amino-acid sequence, 137 residues long: ATP synthase epsilon chain, chloroplastic (137 aa).

It belongs to the ATPase epsilon chain family. As to quaternary structure, F-type ATPases have 2 components, CF(1) - the catalytic core - and CF(0) - the membrane proton channel. CF(1) has five subunits: alpha(3), beta(3), gamma(1), delta(1), epsilon(1). CF(0) has three main subunits: a, b and c.

Its subcellular location is the plastid. It is found in the chloroplast thylakoid membrane. Functionally, produces ATP from ADP in the presence of a proton gradient across the membrane. In Oryza nivara (Indian wild rice), this protein is ATP synthase epsilon chain, chloroplastic.